The primary structure comprises 294 residues: UDP-N-acetylenolpyruvoylglucosamine reductase (294 aa).

The 164-residue stretch at 26-189 (VGGQADVLFK…IEAEFKGVSS (164 aa)) folds into the FAD-binding PCMH-type domain. Arg-169 is an active-site residue. The Proton donor role is filled by Cys-218. Glu-288 is an active-site residue.

It belongs to the MurB family. Requires FAD as cofactor.

The protein localises to the cytoplasm. It carries out the reaction UDP-N-acetyl-alpha-D-muramate + NADP(+) = UDP-N-acetyl-3-O-(1-carboxyvinyl)-alpha-D-glucosamine + NADPH + H(+). It functions in the pathway cell wall biogenesis; peptidoglycan biosynthesis. Its function is as follows. Cell wall formation. In Wolbachia pipientis subsp. Culex pipiens (strain wPip), this protein is UDP-N-acetylenolpyruvoylglucosamine reductase.